The sequence spans 383 residues: Aurachin C monooxygenase/isomerase (383 aa).

FAD is bound by residues glycine 15, serine 47, valine 128, aspartate 285, and 295 to 299 (GQGGC).

It depends on FAD as a cofactor.

The enzyme catalyses aurachin C + NADH + O2 + H(+) = 4-hydroxy-2-methyl-3-oxo-4-[(2E,6E)-farnesyl]-3,4-dihydroquinoline 1-oxide + NAD(+) + H2O. The catalysed reaction is aurachin C + NADPH + O2 + H(+) = 4-hydroxy-2-methyl-3-oxo-4-[(2E,6E)-farnesyl]-3,4-dihydroquinoline 1-oxide + NADP(+) + H2O. It catalyses the reaction aurachin C + NADH + O2 + H(+) = aurachin C epoxide + NAD(+) + H2O. It carries out the reaction aurachin C + NADPH + O2 + H(+) = aurachin C epoxide + NADP(+) + H2O. The enzyme catalyses aurachin C epoxide = 2-hydroxy-1a-methyl-7a-[(2E,6E)-farnesyl]-1a,2-dihydrooxireno[2,3-b]quinolin-7(7aH)-one. The catalysed reaction is 2-hydroxy-1a-methyl-7a-[(2E,6E)-farnesyl]-1a,2-dihydrooxireno[2,3-b]quinolin-7(7aH)-one = 4-hydroxy-2-methyl-3-oxo-4-[(2E,6E)-farnesyl]-3,4-dihydroquinoline 1-oxide. Catalyzes the initial step in the conversion of aurachin C to aurachin B. Catalyzes the epoxidation of the C(2)-C(3) double bond of aurachin C, which is followed by a semipinacol rearrangement, causing migration of the farnesyl group from C(3) to C(4). Accepts both NADH and NADPH, but has a preference for NADH. This is Aurachin C monooxygenase/isomerase from Stigmatella aurantiaca.